Here is a 976-residue protein sequence, read N- to C-terminus: Vacuolar membrane protease (976 aa).

The Cytoplasmic portion of the chain corresponds to 1-51; that stretch reads MPLSTGLTLSSLNVMEKADNHYNMMTKQPPALSPVDMVSSRRGFNPIAFTP. Residues 52–72 form a helical membrane-spanning segment; sequence WPVTILSSLVYLAFIIPIIVV. Residues 73-399 are Vacuolar-facing; that stretch reads HHLVPPAPKE…DNGNDGKLNN (327 aa). 2 N-linked (GlcNAc...) asparagine glycosylation sites follow: asparagine 147 and asparagine 150. Histidine 206 and aspartate 218 together coordinate Zn(2+). Glutamate 252 acts as the Proton acceptor in catalysis. Zn(2+) contacts are provided by glutamate 253, glutamate 278, and histidine 351. The helical transmembrane segment at 400–420 threads the bilayer; it reads GAGTLGVWFDFYGSSFAVFEL. The Cytoplasmic portion of the chain corresponds to 421-427; sequence NTLFGHS. A helical transmembrane segment spans residues 428–448; it reads VALLVVAPLLLIATCVTLYTL. At 449–477 the chain is on the vacuolar side; that stretch reads DKMYMFSMYTYLSESGGQVSLYGLRGLFR. Residues 478–498 traverse the membrane as a helical segment; it reads FPLILGISTALTIGLAFLLMK. Over 499 to 519 the chain is Cytoplasmic; the sequence is ANPFIIYSSPYAVWNPSALHR. Residues 520-540 form a helical membrane-spanning segment; it reads AYAFTWMFGMMWVLLVIATVY. Residues 541–550 are Vacuolar-facing; it reads QKQHGIASSY. Residues 551–571 traverse the membrane as a helical segment; it reads FIVFYFAGVSIATWISYLELF. Residues 572 to 675 are Cytoplasmic-facing; the sequence is GLPTTQDYAR…HRLEQRWSIN (104 aa). The interval 590–633 is disordered; the sequence is TPSSDSRLLAPSADELPPSGSAAGHDFNPEDVEDEEPTESTSLL. The segment covering 618 to 627 has biased composition (acidic residues); the sequence is PEDVEDEEPT. A helical transmembrane segment spans residues 676–696; the sequence is LISSAWILQFLFVAPIVIILL. The Vacuolar portion of the chain corresponds to 697–718; the sequence is GQLGLFLTSATYQIGADGGSQL. A helical transmembrane segment spans residues 719–739; the sequence is VIYVGIAVLSVLILLPLFPFI. Over 740 to 745 the chain is Cytoplasmic; it reads HRFTYH. The helical transmembrane segment at 746–766 threads the bilayer; the sequence is IPTFLLFVLIGTLVYNLTAFP. Residues 767–976 are Vacuolar-facing; it reads FSHSNRLKVA…LVEGSHSFKL (210 aa). An N-linked (GlcNAc...) asparagine glycan is attached at asparagine 848.

The protein belongs to the peptidase M28 family. It depends on Zn(2+) as a cofactor.

It localises to the vacuole membrane. In terms of biological role, may be involved in vacuolar sorting and osmoregulation. This is Vacuolar membrane protease from Arthroderma otae (strain ATCC MYA-4605 / CBS 113480) (Microsporum canis).